The following is a 448-amino-acid chain: Asparagine--tRNA ligase (448 aa).

This sequence belongs to the class-II aminoacyl-tRNA synthetase family. In terms of assembly, homodimer.

Its subcellular location is the cytoplasm. It carries out the reaction tRNA(Asn) + L-asparagine + ATP = L-asparaginyl-tRNA(Asn) + AMP + diphosphate + H(+). This is Asparagine--tRNA ligase from Streptococcus suis (strain 98HAH33).